The chain runs to 417 residues: MSTATLEKAVAAKAPRKQKVILAEGNEAAALGVALARPDMVSVYPITPQSSLVEHVAKLIADGRMDADIVDAEGEHSVLSVLQGGALAGARTYTATCGPGLAFMFEPYFRTSGMRLPIVLTIVTRDGITPQSVWGGHQDAMTVREAGWIQVYCESVQEVLDTTVMAFKIAEHHDVMLPVNVCLDGNYLSYGASRVELPDQAVVDEFMGEKNVNWHVALDPLRPMAVDPLTGGTTGKGPQTFVRYRKGQCRGMQNALSVIEEVHADWAKRIGRSFAPLVEEYRLDDAEFAIMTLGSMTGAAKDAVDEAREAGKKIGLIKIKTFSPFPVEALKKALGKVKALGVIDRSVGFRWNCGPMYQETLGVLYRLGRHIPSISYIGGLAGADITIPHVHRVIDETEALLNGAVAPTEPVWLNEKD.

In terms of assembly, dimer of heteropentamers composed of an alpha (PadG), a beta (PadI), a gamma (PadE), a delta (PadF) and an epsilon (PadH) subunit.

It carries out the reaction phenylglyoxylate + NAD(+) + CoA = benzoyl-CoA + CO2 + NADH. Its activity is regulated as follows. Activated by magnesium ions and thiamine diphosphate. In terms of biological role, involved in the anaerobic metabolism of phenylalanine and phenylacetate. Catalyzes the oxidative decarboxylation of phenylglyoxylate to benzoyl-CoA and CO(2). It can also react slowly with 2-oxo-3-methylbutanoate and use different electron acceptors such as benzyl viologen, methyl viologen, FAD or FMN, but NAD seems to be the physiological electron acceptor. Also catalyzes an isotope exchange between CO(2) and the carboxyl group which proves partial or complete reversibility of the oxidative decarboxylation reaction. This chain is NADH-dependent phenylglyoxylate dehydrogenase subunit alpha (padG), found in Aromatoleum evansii (Azoarcus evansii).